The following is a 1061-amino-acid chain: TonB-dependent transporter Oar (1061 aa).

A signal peptide spans 1-26 (MHLNRVLRETGVVVAAGLLYGSAAFA). The 123-residue stretch at 121 to 243 (EIVGAPPTID…TGGVINAVTR (123 aa)) folds into the TBDR plug domain. The TBDR beta-barrel domain maps to 248 to 1061 (EFHGSVFANW…QVRFGIRYTF (814 aa)). The disordered stretch occupies residues 701-722 (RSLAEPGQGTATSCDPSSFESQ). Residues 709-722 (GTATSCDPSSFESQ) show a composition bias toward polar residues.

The protein belongs to the TonB-dependent receptor family. As to quaternary structure, interacts with TonB. Part of a transport system composed of the outer membrane transporter Oar, the trans-periplasmic binding protein TonB and the inner membrane proteins ExbB and ExbD.

The protein resides in the cell outer membrane. In terms of biological role, required for secretion of the protease PopC across the bacterial outer membrane. Binds and probably transports PopC from the periplasm to the extracellular milieu. It derives its energy for transport by interacting with the trans-periplasmic membrane protein TonB. Required for cellular adhesion during fruiting body formation, a multicellular developmental program that is induced in response to starvation. This is TonB-dependent transporter Oar from Myxococcus xanthus.